The primary structure comprises 435 residues: Sulfopropanediol 3-dehydrogenase (435 aa).

Positions 119, 181, and 204 each coordinate NAD(+). Zn(2+) is bound by residues glutamine 249 and histidine 252. Residues glutamate 319 and histidine 320 each act as proton acceptor in the active site. Positions 353 and 412 each coordinate Zn(2+).

It belongs to the histidinol dehydrogenase family. HpsN subfamily. Zn(2+) serves as cofactor.

It carries out the reaction (2R)-3-sulfopropanediol + 2 NAD(+) + H2O = (2R)-3-sulfolactate + 2 NADH + 3 H(+). Its function is as follows. Catalyzes the NAD-dependent oxidation of (R)-2,3-dihydroxypropane-1-sulfonate to (R)-3-sulfolactate. The sequence is that of Sulfopropanediol 3-dehydrogenase from Ruegeria pomeroyi (strain ATCC 700808 / DSM 15171 / DSS-3) (Silicibacter pomeroyi).